We begin with the raw amino-acid sequence, 5085 residues long: Protein piccolo (5085 aa).

Over residues 1–20 the composition is skewed to low complexity; it reads MGNEASLEGEGLPEGLAAAA. 2 disordered regions span residues 1 to 142 and 173 to 516; these read MGNE…DFKE and DLIS…TPAQ. Residues 92–101 are compositionally biased toward pro residues; that stretch reads PGKPPDPGRP. Composition is skewed to basic and acidic residues over residues 110–121, 132–142, and 184–198; these read RTTDTFRSEQKL, KESKSRTDFKE, and ETTK…EQGK. 2 positions are modified to phosphoserine: serine 211 and serine 231. Residues 227 to 240 are compositionally biased toward polar residues; that stretch reads QQDSSPKSVSSQQA. A compositionally biased stretch (low complexity) spans 253-268; sequence PSQQSPAQTPAQQASP. 3 stretches are compositionally biased toward polar residues: residues 275–285, 318–332, and 375–391; these read QPGSAKATVQQ, KTSS…SLAQ, and TPAQ…QQPG. Residues 372-491 form a 12 X 10 AA tandem approximate repeats of P-A-K-P-Q-P-Q-Q-P-X region; that stretch reads PTKTPAQQSG…LAKPSAQQPT (120 aa). Residues 392-408 are compositionally biased toward pro residues; the sequence is PTKPSPQQPIPAKPQPQ. Residues 409–423 are compositionally biased toward low complexity; the sequence is QPVATKTQPQQSAPA. Pro residues predominate over residues 424–472; that stretch reads KPQPQQPAPAKPQPQQPTPAKPQPQPPTPAKPQPQPPTATKPQPQPPTA. Residues 486-499 show a composition bias toward polar residues; it reads SAQQPTKSISQTVT. The C4-type zinc-finger motif lies at 523–547; that stretch reads CPLCNTTELLLHIPEKANFNTCTEC. Disordered regions lie at residues 586–880, 896–1012, 1069–1357, 1373–1604, and 1622–1815; these read AAIP…TVTG, LIST…ACPL, QLGD…PSDL, STLV…EELV, and TIAD…SDPE. Low complexity predominate over residues 596–613; the sequence is PKAATAPTATASKSPVPS. A compositionally biased stretch (basic and acidic residues) spans 618 to 654; that stretch reads PKKEPPSKQDSPKALESKKPPEPKKPPEPKKPPEPKK. Over residues 672 to 682 the composition is skewed to low complexity; sequence APQLPVAEALP. A compositionally biased stretch (pro residues) spans 683–693; that stretch reads EPAPPKEPSGP. Residues 705 to 717 are compositionally biased toward basic and acidic residues; that stretch reads VEPKQPKMTETRA. The span at 718-767 shows a compositional bias: polar residues; that stretch reads DIQSSSTTKPDILSSQVQSQAQVKTASPLKTDSAKPSQSFPPTGEKTTPL. Basic and acidic residues predominate over residues 790–808; sequence ESKDPKHIDPIQKKDEPKK. Serine 857 and serine 869 each carry phosphoserine. 3 stretches are compositionally biased toward polar residues: residues 867–878, 896–906, and 917–936; these read PKSQPTTPQETV, LISTAGQQGPH, and QAPT…STGQ. Threonine 873 bears the Phosphothreonine mark. The segment covering 990–1004 has biased composition (basic and acidic residues); it reads EPEKAVPAHKPDKTT. The C4-type zinc-finger motif lies at 1010–1033; sequence CPLCRTELNLGSQEPPNFNTCTEC. The segment covering 1077 to 1092 has biased composition (pro residues); the sequence is PPAPSGPKASPMPAPA. Residues 1110 to 1129 are compositionally biased toward basic and acidic residues; it reads KEAEGKTEAEKPVPEKETAS. At threonine 1133 the chain carries Phosphothreonine. Basic and acidic residues-rich tracts occupy residues 1141 to 1150, 1157 to 1199, and 1274 to 1295; these read QKLEESEGKK, PEKK…KLPP, and SSKD…DKSD. Over residues 1300 to 1318 the composition is skewed to polar residues; the sequence is QQPKSPQGLSDTGYSSDGI. Phosphoserine is present on residues serine 1304, serine 1314, serine 1315, serine 1344, serine 1346, serine 1349, serine 1350, and serine 1353. Residues 1331–1345 show a composition bias toward basic and acidic residues; it reads SDEKDLLKGLKKDSF. Over residues 1346–1355 the composition is skewed to low complexity; it reads SQESSPSSPS. Positions 1378–1396 are enriched in basic and acidic residues; the sequence is EKAEKKTQPQKISPEKPQD. Residues 1397–1407 are compositionally biased toward polar residues; it reads QQKTQTASETL. Residues 1417–1456 show a composition bias toward basic and acidic residues; sequence KESQEKKVSPKKDSEQGFPSRKEHKEKPELVDDLSPRRAS. Phosphoserine occurs at positions 1451, 1463, 1464, 1466, 1469, 1493, 1496, 1517, and 1519. The span at 1511 to 1523 shows a compositional bias: acidic residues; that stretch reads SADEDASGSEDEE. Threonine 1564 carries the post-translational modification Phosphothreonine. Phosphoserine is present on residues serine 1565, serine 1575, and serine 1587. The segment covering 1578–1587 has biased composition (acidic residues); that stretch reads DEDDETFDES. Residues 1588–1599 show a composition bias toward basic and acidic residues; sequence PELKFRETKSQE. A compositionally biased stretch (polar residues) spans 1622 to 1635; the sequence is TIADKYSSESSQKK. Residues 1640-1650 are compositionally biased toward acidic residues; it reads FDEEPELEMES. Serine 1650 carries the post-translational modification Phosphoserine. Phosphothreonine is present on threonine 1652. Serine 1654 and serine 1659 each carry phosphoserine. The span at 1662–1679 shows a compositional bias: polar residues; it reads EGSSSLHASSFTPGTSPT. A compositionally biased stretch (acidic residues) spans 1719 to 1732; that stretch reads DSSEEEELREEEEL. Serine 1720 and serine 1721 each carry phosphoserine. The segment covering 1733–1746 has biased composition (basic and acidic residues); sequence LKEQEKQRELEQQQ. Threonine 1772 carries the post-translational modification Phosphothreonine. Position 1778 is a phosphoserine (serine 1778). Over residues 1787 to 1802 the composition is skewed to basic and acidic residues; that stretch reads EELRQAAEMEELHRSS. Residues serine 1807, serine 1812, serine 1820, and serine 1841 each carry the phosphoserine modification. Disordered stretches follow at residues 2116-2139, 2275-2385, and 2456-2486; these read PSES…SSVC, ELTK…PTYP, and KPPI…TGLS. Low complexity predominate over residues 2121–2139; sequence TSVPPSDTPSLTSSISSVC. The span at 2350–2384 shows a compositional bias: pro residues; it reads QPPPPPPPPPPSPSTSSPPPTPPLPPATSPKPPTY. Phosphoserine is present on serine 2511. O-linked (GlcNAc) threonine glycosylation is present at threonine 2702. Serine 2976 is a glycosylation site (O-linked (GlcNAc) serine). A Phosphothreonine modification is found at threonine 3014. Disordered stretches follow at residues 3350–3457 and 3503–3572; these read KEEK…PLSK and KTYK…LYSP. Residue serine 3374 is modified to Phosphoserine. The segment covering 3377–3386 has biased composition (basic and acidic residues); that stretch reads DDPRNLKKIV. Serine 3388 is subject to Phosphoserine. 2 positions are modified to phosphothreonine: threonine 3392 and threonine 3419. The segment covering 3419–3428 has biased composition (acidic residues); sequence TDDEDQDEWD. A compositionally biased stretch (polar residues) spans 3511 to 3523; that stretch reads GCQTETDSDTQSP. Phosphoserine is present on residues serine 3522, serine 3530, serine 3561, serine 3565, serine 3571, serine 3574, serine 3577, serine 3598, serine 3624, serine 3626, and serine 3632. Disordered stretches follow at residues 3602–3695 and 3774–3816; these read VLHP…ASRR and AEDR…FIPP. Polar residues-rich tracts occupy residues 3647 to 3663 and 3679 to 3691; these read EGFT…SGTQ and STGT…TMGT. A Phosphoserine modification is found at serine 3781. Basic and acidic residues predominate over residues 3791-3803; sequence SRVESQHGVERPR. Residues 3805–3816 show a composition bias toward polar residues; it reads APQTEFSQFIPP. Residues serine 4034 and serine 4150 each carry the phosphoserine modification. Disordered regions lie at residues 4225 to 4248 and 4272 to 4291; these read ADKP…YGLD and VSFG…LPIS. Positions 4228–4248 are enriched in low complexity; it reads PYSSGSRSRPSSRPSSVYGLD. Polar residues predominate over residues 4275–4291; sequence GHSSSSARTKPTSLPIS. A phosphoserine mark is found at serine 4304, serine 4308, serine 4311, serine 4340, and serine 4376. The disordered stretch occupies residues 4335–4357; it reads RDQFGSSHSLPEVQQHMREESRT. A PDZ domain is found at 4442-4536; the sequence is RVKITRDFKD…EAEICVRLDL (95 aa). The segment at 4589–4638 is disordered; the sequence is VEKGSHAHSGPTSAGSSSVPSPGQPGSPSVSKKKHSSTKPTDGPKAASHP. The span at 4595 to 4618 shows a compositional bias: low complexity; that stretch reads AHSGPTSAGSSSVPSPGQPGSPSV. Serine 4609 bears the Phosphoserine mark. Residues 4639–4768 enclose the C2 1 domain; the sequence is ITGEIQLQIN…SHLDNTPRWY (130 aa). Residues aspartate 4668 and aspartate 4674 each contribute to the Ca(2+) site. Serine 4723 carries the post-translational modification Phosphoserine. The Ca(2+) site is built by aspartate 4738, aspartate 4740, serine 4743, and aspartate 4746. Disordered stretches follow at residues 4775–4851 and 4874–4908; these read ESID…SVAQ and QPTK…SEGS. Composition is skewed to low complexity over residues 4783–4795 and 4822–4832; these read HSSQ…PKPS and SSPGSSKSSSE. Over residues 4840 to 4851 the composition is skewed to polar residues; that stretch reads PSRSQSKTSVAQ. A compositionally biased stretch (low complexity) spans 4886–4908; it reads SSVSTGSSGSSVGSGYSVDSEGS. In terms of domain architecture, C2 2 spans 4950–5075; sequence VMGEIKLALK…DLRKRIVNWH (126 aa).

As to quaternary structure, interacts with BSN, ERC2/CAST1, RIMS1 and UNC13A. Interacts (via C-terminus) with TRIO (via N-terminus). Interacts with CTBP1. Interacts with SIAH1; this interaction negatively regulates SIAH1 E3 ligase activity. Directly interacts with GIT1 and GIT2. The cofactor is Ca(2+). As to expression, expressed in brain (at protein level).

It is found in the presynaptic active zone. Functionally, scaffold protein of the presynaptic cytomatrix at the active zone (CAZ) which is the place in the synapse where neurotransmitter is released. After synthesis, participates in the formation of Golgi-derived membranous organelles termed Piccolo-Bassoon transport vesicles (PTVs) that are transported along axons to sites of nascent synaptic contacts. At the presynaptic active zone, regulates the spatial organization of synaptic vesicle cluster, the protein complexes that execute membrane fusion and compensatory endocytosis. Organizes as well the readily releasable pool of synaptic vesicles and safeguards a fraction of them to be not immediately available for action potential-induced release. Also functions in processes other than assembly such as the regulation of specific presynaptic protein ubiquitination by interacting with SIAH1 or the regulation of presynaptic autophagy. Also mediates synapse to nucleus communication leading to reconfiguration of gene expression by associating with the transcriptional corepressor CTBP1 and by subsequently reducing the size of its pool available for nuclear import. This Rattus norvegicus (Rat) protein is Protein piccolo (Pclo).